The following is a 476-amino-acid chain: ATP synthase subunit beta (476 aa).

Position 154-161 (154-161 (GGAGVGKT)) interacts with ATP.

This sequence belongs to the ATPase alpha/beta chains family. In terms of assembly, F-type ATPases have 2 components, CF(1) - the catalytic core - and CF(0) - the membrane proton channel. CF(1) has five subunits: alpha(3), beta(3), gamma(1), delta(1), epsilon(1). CF(0) has four main subunits: a(1), b(1), b'(1) and c(9-12).

It localises to the cell inner membrane. The enzyme catalyses ATP + H2O + 4 H(+)(in) = ADP + phosphate + 5 H(+)(out). Produces ATP from ADP in the presence of a proton gradient across the membrane. The catalytic sites are hosted primarily by the beta subunits. The sequence is that of ATP synthase subunit beta from Rhodopseudomonas palustris (strain BisA53).